Consider the following 254-residue polypeptide: Triosephosphate isomerase (254 aa).

12–14 is a substrate binding site; it reads NWK. Histidine 99 functions as the Electrophile in the catalytic mechanism. Glutamate 169 functions as the Proton acceptor in the catalytic mechanism. Substrate contacts are provided by residues glycine 175, serine 214, and 235 to 236; that span reads GG.

This sequence belongs to the triosephosphate isomerase family. Homodimer.

The protein localises to the cytoplasm. It carries out the reaction D-glyceraldehyde 3-phosphate = dihydroxyacetone phosphate. It participates in carbohydrate biosynthesis; gluconeogenesis. Its pathway is carbohydrate degradation; glycolysis; D-glyceraldehyde 3-phosphate from glycerone phosphate: step 1/1. Involved in the gluconeogenesis. Catalyzes stereospecifically the conversion of dihydroxyacetone phosphate (DHAP) to D-glyceraldehyde-3-phosphate (G3P). This is Triosephosphate isomerase from Xanthobacter autotrophicus (strain ATCC BAA-1158 / Py2).